The primary structure comprises 423 residues: Histidine--tRNA ligase (423 aa).

Belongs to the class-II aminoacyl-tRNA synthetase family. As to quaternary structure, homodimer.

Its subcellular location is the cytoplasm. The catalysed reaction is tRNA(His) + L-histidine + ATP = L-histidyl-tRNA(His) + AMP + diphosphate + H(+). This is Histidine--tRNA ligase from Geobacillus sp. (strain WCH70).